The primary structure comprises 256 residues: Phosphate import ATP-binding protein PstB (256 aa).

Positions 10-251 (IRTVNVNFYY…PEQKQTEDYI (242 aa)) constitute an ABC transporter domain. An ATP-binding site is contributed by 42–49 (GPSGCGKS).

This sequence belongs to the ABC transporter superfamily. Phosphate importer (TC 3.A.1.7) family. As to quaternary structure, the complex is composed of two ATP-binding proteins (PstB), two transmembrane proteins (PstC and PstA) and a solute-binding protein (PstS).

It is found in the cell inner membrane. It catalyses the reaction phosphate(out) + ATP + H2O = ADP + 2 phosphate(in) + H(+). Part of the ABC transporter complex PstSACB involved in phosphate import. Responsible for energy coupling to the transport system. This Syntrophus aciditrophicus (strain SB) protein is Phosphate import ATP-binding protein PstB.